The primary structure comprises 339 residues: Heat-inducible transcription repressor HrcA (339 aa).

It belongs to the HrcA family.

Functionally, negative regulator of class I heat shock genes (grpE-dnaK-dnaJ and groELS operons). Prevents heat-shock induction of these operons. The polypeptide is Heat-inducible transcription repressor HrcA (Acidothermus cellulolyticus (strain ATCC 43068 / DSM 8971 / 11B)).